Reading from the N-terminus, the 451-residue chain is MSFKPVVALVGRPNVGKSTLFNRLTRSRAALVADYSGLTRDRHYGEGRVGDTPFIVIDTGGFEPVAKTGILREMARQTRQAIAEADVVVFLVDARAGVNAHDHEIAQLLRKSGQQRVVLAVNKAEGMGVGNATSEFHELGLGTPYPISAAHGDGIVDLIGLALQDLVEPEPEPAPDAADLPPDHRIKLAIVGRPNVGKSTLINTLLGEERVIAFDLPGTTRDAIEIDFERDGRKYTLIDTAGLRRRGKVFEAVEKFSVIKTLQAIEASNVVLLMLDAQTEVSEQDAHIAGFVLETGRAVVVAINKWDGLDIDQRERIEREFRRKLRFLSFAPTHTISALKGQGIKPVLKSVVAAHAAAFAKLSTPKLTRELHAAVEQQPPPRKGIFRPKMRYAHQGGQNPPLVIIHGNALDAIPDSYRRYLETRFREAFKLDGTPLRIEFKSSRNPYTQES.

EngA-type G domains lie at 5 to 170 (PVVA…VEPE) and 186 to 359 (IKLA…AAAF). GTP-binding positions include 11–18 (GRPNVGKS), 58–62 (DTGGF), 122–125 (NKAE), 192–199 (GRPNVGKS), 239–243 (DTAGL), and 304–307 (NKWD). Residues 360-444 (AKLSTPKLTR…PLRIEFKSSR (85 aa)) form the KH-like domain.

Belongs to the TRAFAC class TrmE-Era-EngA-EngB-Septin-like GTPase superfamily. EngA (Der) GTPase family. Associates with the 50S ribosomal subunit.

Its function is as follows. GTPase that plays an essential role in the late steps of ribosome biogenesis. This is GTPase Der from Bordetella petrii (strain ATCC BAA-461 / DSM 12804 / CCUG 43448).